The chain runs to 1179 residues: MAPRPRARPGVAVACCWLLTVVLRCCVSFNVDVKNSMTFSGPVEDMFGYTVQQYENEEGKWVLIGSPLVGQPKNRTGDVYKCPVGRGESLPCVKLDLPVNTSIPNVTEVKENMTFGSTLVTNPNGGFLACGPLYAYRCGHLHYTTGICSDVSPTFQVVNSIAPVQECSTQLDIVIVLDGSNSIYPWDSVTAFLNDLLERMDIGPKQTQVGIVQYGENVTHEFNLNKYSSTEEVLVAAKKIVQRGGRQTMTALGIDTARKEAFTEARGARRGVKKVMVIVTDGESHDNHRLKKVIQDCEDENIQRFSIAILGSYNRGNLSTEKFVEEIKSIASEPTEKHFFNVSDELALVTIVKTLGERIFALEATADQSAASFEMEMSQTGFSAHYSQDWVMLGAVGAYDWNGTVVMQKASQIIIPRNTTFNVESTKKNEPLASYLGYTVNSATASSGDVLYIAGQPRYNHTGQVIIYRMEDGNIKILQTLSGEQIGSYFGSILTTTDIDKDSNTDILLVGAPMYMGTEKEEQGKVYVYALNQTRFEYQMSLEPIKQTCCSSRQHNSCTTENKNEPCGARFGTAIAAVKDLNLDGFNDIVIGAPLEDDHGGAVYIYHGSGKTIRKEYAQRIPSGGDGKTLKFFGQSIHGEMDLNGDGLTDVTIGGLGGAALFWSRDVAVVKVTMNFEPNKVNIQKKNCHMEGKETVCINATVCFDVKLKSKEDTIYEADLQYRVTLDSLRQISRSFFSGTQERKVQRNITVRKSECTKHSFYMLDKHDFQDSVRITLDFNLTDPENGPVLDDSLPNSVHEYIPFAKDCGNKEKCISDLSLHVATTEKDLLIVRSQNDKFNVSLTVKNTKDSAYNTRTIVHYSPNLVFSGIEAIQKDSCESNHNITCKVGYPFLRRGEMVTFKILFQFNTSYLMENVTIYLSATSDSEEPPETLSDNVVNISIPVKYEVGLQFYSSASEYHISIAANETVPEVINSTEDIGNEINIFYLIRKSGSFPMPELKLSISFPNMTSNGYPVLYPTGLSSSENANCRPHIFEDPFSINSGKKMTTSTDHLKRGTILDCNTCKFATITCNLTSSDISQVNVSLILWKPTFIKSYFSSLNLTIRGELRSENASLVLSSSNQKRELAIQISKDGLPGRVPLWVILLSAFAGLLLLMLLILALWKIGFFKRPLKKKMEK.

Residues 1–28 form the signal peptide; sequence MAPRPRARPGVAVACCWLLTVVLRCCVS. The Extracellular portion of the chain corresponds to 29-1141; that stretch reads FNVDVKNSMT…SKDGLPGRVP (1113 aa). The FG-GAP 1 repeat unit spans residues 30-91; it reads NVDVKNSMTF…CPVGRGESLP (62 aa). Asn-74 carries N-linked (GlcNAc...) asparagine glycosylation. A disulfide bond links Cys-82 and Cys-92. N-linked (GlcNAc...) asparagine glycosylation is found at Asn-100, Asn-105, Asn-112, Asn-217, Asn-317, Asn-341, Asn-402, Asn-418, and Asn-460. The stretch at 101–160 is one FG-GAP 2 repeat; that stretch reads TSIPNVTEVKENMTFGSTLVTNPNGGFLACGPLYAYRCGHLHYTTGICSDVSPTFQVVNS. The 200-residue stretch at 161–360 folds into the VWFA domain; sequence IAPVQECSTQ…IVKTLGERIF (200 aa). The FG-GAP 3 repeat unit spans residues 365-417; it reads TADQSAASFEMEMSQTGFSAHYSQDWVMLGAVGAYDWNGTVVMQKASQIIIPR. FG-GAP repeat units lie at residues 422–475, 476–538, 557–615, and 619–679; these read NVES…DGNI, KILQ…RFEY, SCTT…TIRK, and QRIP…FEPN. Positions 498, 500, 502, and 506 each coordinate Ca(2+). Residue Asn-532 is glycosylated (N-linked (GlcNAc...) asparagine). Ca(2+) contacts are provided by Asp-580, Asn-582, Asp-584, Asp-588, Asp-642, Asn-644, Asp-646, and Asp-650. A disulfide bridge connects residues Cys-688 and Cys-697. 3 N-linked (GlcNAc...) asparagine glycosylation sites follow: Asn-699, Asn-748, and Asn-780. Cys-703 and Cys-756 are disulfide-bonded. The cysteines at positions 808 and 814 are disulfide-linked. 8 N-linked (GlcNAc...) asparagine glycosylation sites follow: Asn-840, Asn-883, Asn-908, Asn-915, Asn-939, Asn-966, Asn-974, and Asn-1008. Cys-878 and Cys-886 are oxidised to a cystine. 2 disulfide bridges follow: Cys-1030/Cys-1062 and Cys-1065/Cys-1072. 4 N-linked (GlcNAc...) asparagine glycosylation sites follow: Asn-1073, Asn-1083, Asn-1102, and Asn-1113. A helical membrane pass occupies residues 1142–1164; the sequence is LWVILLSAFAGLLLLMLLILALW. Residues 1165 to 1179 are Cytoplasmic-facing; it reads KIGFFKRPLKKKMEK. The GFFKR motif signature appears at 1167-1171; it reads GFFKR.

It belongs to the integrin alpha chain family. As to quaternary structure, heterodimer of an alpha and a beta subunit. Alpha-1 associates with beta-1. Interacts with RAB21. Interacts (via cytoplasmic domain) with PTPN2; activates PTPN2 phosphatase activity towards EGFR and negatively regulates EGF signaling.

It localises to the membrane. In terms of biological role, integrin alpha-1/beta-1 is a receptor for laminin and collagen. It recognizes the proline-hydroxylated sequence G-F-P-G-E-R in collagen. Involved in anchorage-dependent, negative regulation of EGF-stimulated cell growth. This Homo sapiens (Human) protein is Integrin alpha-1 (ITGA1).